The sequence spans 122 residues: Large ribosomal subunit protein bL12 (122 aa).

It belongs to the bacterial ribosomal protein bL12 family. Homodimer. Part of the ribosomal stalk of the 50S ribosomal subunit. Forms a multimeric L10(L12)X complex, where L10 forms an elongated spine to which 2 to 4 L12 dimers bind in a sequential fashion. Binds GTP-bound translation factors.

Forms part of the ribosomal stalk which helps the ribosome interact with GTP-bound translation factors. Is thus essential for accurate translation. This chain is Large ribosomal subunit protein bL12, found in Xylella fastidiosa (strain M23).